The chain runs to 195 residues: Imidazoleglycerol-phosphate dehydratase (195 aa).

This sequence belongs to the imidazoleglycerol-phosphate dehydratase family.

The protein localises to the cytoplasm. The catalysed reaction is D-erythro-1-(imidazol-4-yl)glycerol 3-phosphate = 3-(imidazol-4-yl)-2-oxopropyl phosphate + H2O. The protein operates within amino-acid biosynthesis; L-histidine biosynthesis; L-histidine from 5-phospho-alpha-D-ribose 1-diphosphate: step 6/9. The sequence is that of Imidazoleglycerol-phosphate dehydratase from Acetivibrio thermocellus (strain ATCC 27405 / DSM 1237 / JCM 9322 / NBRC 103400 / NCIMB 10682 / NRRL B-4536 / VPI 7372) (Clostridium thermocellum).